The primary structure comprises 1457 residues: Receptor-type tyrosine-protein phosphatase kappa (1457 aa).

A signal peptide spans methionine 1 to serine 25. Residues alanine 26–lysine 752 are Extracellular-facing. One can recognise an MAM domain in the interval phenylalanine 30–lysine 193. N-linked (GlcNAc...) asparagine glycans are attached at residues asparagine 100, asparagine 139, and asparagine 210. Residues proline 195–serine 280 form the Ig-like C2-type domain. Cysteines 215 and 269 form a disulfide. 4 consecutive Fibronectin type-III domains span residues proline 293 to proline 388, threonine 391 to aspartate 487, glycine 490 to serine 594, and leucine 595 to aspartate 688. Residues asparagine 415, asparagine 423, asparagine 435, asparagine 461, asparagine 551, asparagine 585, asparagine 589, asparagine 606, and asparagine 689 are each glycosylated (N-linked (GlcNAc...) asparagine). The chain crosses the membrane as a helical span at residues isoleucine 753–valine 774. Over lysine 775 to serine 1457 the chain is Cytoplasmic. Position 868 is a phosphoserine (serine 868). Tyrosine-protein phosphatase domains lie at phenylalanine 899–alanine 1159 and leucine 1191–tyrosine 1453. Substrate-binding positions include aspartate 1068, cysteine 1100–arginine 1106, and glutamine 1144. Catalysis depends on cysteine 1100, which acts as the Phosphocysteine intermediate. The active-site Phosphocysteine intermediate is the cysteine 1394.

This sequence belongs to the protein-tyrosine phosphatase family. Receptor class 2B subfamily. This protein undergoes proteolytic processing. In terms of tissue distribution, high levels in liver and kidney. Lower levels in lung, brain and heart. Not seen in spleen and testis.

The protein localises to the membrane. The catalysed reaction is O-phospho-L-tyrosyl-[protein] + H2O = L-tyrosyl-[protein] + phosphate. Its function is as follows. Regulation of processes involving cell contact and adhesion such as growth control, tumor invasion, and metastasis. Negative regulator of EGFR signaling pathway. Forms complexes with beta-catenin and gamma-catenin/plakoglobin. Beta-catenin may be a substrate for the catalytic activity of PTPRK/PTP-kappa. The protein is Receptor-type tyrosine-protein phosphatase kappa (Ptprk) of Mus musculus (Mouse).